A 544-amino-acid polypeptide reads, in one-letter code: Putative ankyrin repeat protein L289 (544 aa).

11 ANK repeats span residues 31 to 71, 72 to 105, 110 to 143, 147 to 181, 185 to 218, 222 to 255, 259 to 297, 300 to 339, 340 to 374, 378 to 413, and 414 to 447; these read KNFS…AQNE, HGWT…DPNI, YSQT…DINH, LGVS…DINS, QGNT…DPNI, KGTT…NINF, YNET…DIPI, DKLS…IQCS, NGKT…NPNI, QGKT…TIDN, and TGQS…CVNK.

This Acanthamoeba polyphaga mimivirus (APMV) protein is Putative ankyrin repeat protein L289.